The following is a 511-amino-acid chain: MFS-type transporper mpsC (511 aa).

Residues 1 to 35 show a composition bias toward basic and acidic residues; it reads MTSSTESKHSNDESTDLEKQDAEESHGLPEERKQD. Positions 1-65 are disordered; the sequence is MTSSTESKHS…PDDPANPMNW (65 aa). 7 consecutive transmembrane segments (helical) span residues 74 to 94, 108 to 128, 147 to 167, 169 to 189, 201 to 221, 228 to 248, and 303 to 323; these read VVMA…FAPA, ITAA…PLVI, ITVA…FLVF, LITG…IADV, AFAM…GFIA, WVFR…YFVM, and PITL…ILLF. The N-linked (GlcNAc...) asparagine glycan is linked to Asn-337. The next 5 helical transmembrane spans lie at 342 to 362, 383 to 403, 411 to 431, 443 to 465, and 476 to 496; these read GLSY…FGML, LLLM…YGWT, ILPM…MMPI, VAAS…LPLA, and GWGN…PILF.

It belongs to the major facilitator superfamily.

The protein localises to the membrane. MFS-type transporper; part of the gene cluster that mediates the biosynthesis of macrophasetins, 3-decalinoyltetramic acids (DTAs) which feature a tetramate (pyrrolidine-2,4-dione) unit connected to a decalin fragment and that have potent bioactivities. Efflux pump that might be required for efficient secretion of macrophasetins. The polypeptide is MFS-type transporper mpsC (Macrophomina phaseolina (strain MS6) (Charcoal rot fungus)).